The sequence spans 66 residues: Toxin Boma6a (66 aa).

Residues 2–64 (RDAYIAQNYN…VPIKVEGKCH (63 aa)) enclose the LCN-type CS-alpha/beta domain. 4 disulfides stabilise this stretch: Cys-12/Cys-63, Cys-16/Cys-36, Cys-22/Cys-46, and Cys-26/Cys-48.

The protein belongs to the long (4 C-C) scorpion toxin superfamily. Sodium channel inhibitor family. Alpha subfamily. In terms of tissue distribution, expressed by the venom gland.

The protein resides in the secreted. Its function is as follows. Alpha toxins bind voltage-independently at site-3 of sodium channels (Nav) and inhibit the inactivation of the activated channels, thereby blocking neuronal transmission. The polypeptide is Toxin Boma6a (Buthus occitanus mardochei (Moroccan scorpion)).